A 364-amino-acid polypeptide reads, in one-letter code: Probable endopolygalacturonase B (364 aa).

A signal peptide spans 1 to 20 (MHFFQSSLVAATMGAALVAA). A propeptide spanning residues 21–29 (APAADLETR) is cleaved from the precursor. Cys-32 and Cys-47 form a disulfide bridge. 2 N-linked (GlcNAc...) asparagine glycosylation sites follow: Asn-138 and Asn-141. 6 PbH1 repeats span residues 159–188 (SDHL…DVGS), 189–210 (STYI…AVNS), 211–231 (GEHI…SIGS), 240–261 (VNDV…RIKT), 269–291 (VTGV…VVQQ), and 303–324 (TNGV…TSSA). The active-site Proton donor is the Asp-203. Cys-205 and Cys-221 form a disulfide bridge. His-225 is an active-site residue. An intrachain disulfide couples Cys-331 to Cys-336. N-linked (GlcNAc...) asparagine glycosylation occurs at Asn-338. Cys-355 and Cys-364 are joined by a disulfide.

Belongs to the glycosyl hydrolase 28 family.

Its subcellular location is the secreted. It carries out the reaction (1,4-alpha-D-galacturonosyl)n+m + H2O = (1,4-alpha-D-galacturonosyl)n + (1,4-alpha-D-galacturonosyl)m.. In terms of biological role, involved in maceration and soft-rotting of plant tissue. Hydrolyzes the 1,4-alpha glycosidic bonds of de-esterified pectate in the smooth region of the plant cell wall. This Aspergillus fumigatus (strain CBS 144.89 / FGSC A1163 / CEA10) (Neosartorya fumigata) protein is Probable endopolygalacturonase B (pgaB).